The chain runs to 482 residues: uncharacterized protein (482 aa).

One can recognise an HTH gntR-type domain in the interval 12–80 (LPKYRQIVHF…MGKGTVVINN (69 aa)). A DNA-binding region (H-T-H motif) is located at residues 40–59 (QRTLAKDFQVNRSTVITALE). K325 bears the N6-(pyridoxal phosphate)lysine mark.

It in the C-terminal section; belongs to the class-I pyridoxal-phosphate-dependent aminotransferase family. Requires pyridoxal 5'-phosphate as cofactor.

This is an uncharacterized protein from Bacillus subtilis (strain 168).